Here is a 247-residue protein sequence, read N- to C-terminus: MSGHNKWSTIKHKKGAADAKRGKIFTKIIKEITVAAKLGGGDPDGNPRLRTAIDKAKGENMPKDNVERAIKKGVGGLEGTTYEETTYEGYGPGGTAVLVEVMTDNRNRTVSDVRSIFTKCNGNMGESGCVSWLFDKKGLLVFPKSIDFDKLFEASIEAGADDVTDEDEQYEVLTDPSAFHQVKTALEGAGFKAESAEITMIPQTMVKLEGKNAENMLKLMDRMEDNDDVQNVYANFDISEEEMEKMM.

This sequence belongs to the TACO1 family.

Its subcellular location is the cytoplasm. In Geobacter sp. (strain M21), this protein is Probable transcriptional regulatory protein GM21_0933.